Consider the following 80-residue polypeptide: Probable Rubredoxin-1 (80 aa).

The Rubredoxin-like domain maps to 19–72; sequence YRKYKCKVCGWVYDPLKGDPSQNIPPKTPFEELPDTWICPVCRGKVGKESFEPL. Cys24, Cys27, Cys57, and Cys60 together coordinate Fe cation.

It belongs to the rubredoxin family. Fe(3+) is required as a cofactor.

Its function is as follows. Rubredoxin is a small nonheme, iron protein lacking acid-labile sulfide. Its single Fe, chelated to 4 Cys, functions as an electron acceptor and may also stabilize the conformation of the molecule. This chain is Probable Rubredoxin-1, found in Methanocaldococcus jannaschii (strain ATCC 43067 / DSM 2661 / JAL-1 / JCM 10045 / NBRC 100440) (Methanococcus jannaschii).